Here is a 215-residue protein sequence, read N- to C-terminus: MKTVLLTGFDPFGGESINPAWEVAKSLHEKTIGEYTIISKQVPTVFHKSIKVLKEYIEELNPEMIICIGQAGGRPDITIERVAINVDDARIADNEGNQPIDVPVAEEGPAAYWSTLPMKAIVKRLQEEGIPAFVSQTAGTFVCNHLFYGLMHELEKRDKKIKGGFIHIPFLPEQASKYPGQPSMSLSTIRKGIELAVEVTTTVEVDIVEVGGATH.

Active-site residues include Glu80, Cys143, and His167.

This sequence belongs to the peptidase C15 family. In terms of assembly, homotetramer.

It is found in the cytoplasm. The catalysed reaction is Release of an N-terminal pyroglutamyl group from a polypeptide, the second amino acid generally not being Pro.. Its function is as follows. Removes 5-oxoproline from various penultimate amino acid residues except L-proline. The chain is Pyrrolidone-carboxylate peptidase from Bacillus cereus (strain G9842).